The primary structure comprises 215 residues: FMN-dependent NADH:quinone oxidoreductase (215 aa).

17–19 is an FMN binding site; sequence SAS.

This sequence belongs to the azoreductase type 1 family. Homodimer. It depends on FMN as a cofactor.

The enzyme catalyses 2 a quinone + NADH + H(+) = 2 a 1,4-benzosemiquinone + NAD(+). It carries out the reaction N,N-dimethyl-1,4-phenylenediamine + anthranilate + 2 NAD(+) = 2-(4-dimethylaminophenyl)diazenylbenzoate + 2 NADH + 2 H(+). Its function is as follows. Quinone reductase that provides resistance to thiol-specific stress caused by electrophilic quinones. Also exhibits azoreductase activity. Catalyzes the reductive cleavage of the azo bond in aromatic azo compounds to the corresponding amines. This Clostridium botulinum (strain Eklund 17B / Type B) protein is FMN-dependent NADH:quinone oxidoreductase.